Here is a 309-residue protein sequence, read N- to C-terminus: Probable copper-dependent oxygenase clz3 (309 aa).

Residues Asn9 and Asn249 are each glycosylated (N-linked (GlcNAc...) asparagine). The chain crosses the membrane as a helical span at residues 257–277; that stretch reads FAVPLAAIAFIALIISGGYVI.

Belongs to the clz3 oxygenase family.

Its subcellular location is the membrane. Its pathway is secondary metabolite biosynthesis. Functionally, probable copper-dependent oxygenase; part of the gene cluster that mediates the biosynthesis of squalestatin S1 (SQS1, also known as zaragozic acid A), a heavily oxidized fungal polyketide that offers potent cholesterol lowering activity by targeting squalene synthase (SS). SQS1 is composed of a 2,8-dioxobicyclic[3.2.1]octane-3,4,5-tricarboxyclic acid core that is connected to two lipophilic polyketide arms. These initial steps feature the priming of an unusual benzoic acid starter unit onto the highly reducing polyketide synthase clz14, followed by oxaloacetate extension and product release to generate a tricarboxylic acid containing product. The phenylalanine ammonia lyase (PAL) clz10 and the acyl-CoA ligase clz12 are involved in transforming phenylalanine into benzoyl-CoA. The citrate synthase-like protein clz17 is involved in connecting the C-alpha-carbons of the hexaketide chain and oxaloacetate to afford the tricarboxylic acid unit. The potential hydrolytic enzymes, clz11 and clz13, are in close proximity to pks2 and may participate in product release. On the other side, the tetraketide arm is synthesized by a the squalestatin tetraketide synthase clz2 and enzymatically esterified to the core in the last biosynthetic step, by the acetyltransferase clz6. The biosynthesis of the tetraketide must involve 3 rounds of chain extension. After the first and second rounds methyl-transfer occurs, and in all rounds of extension the ketoreductase and dehydratase are active. The enoyl reductase and C-MeT of clz2 are not active in the final round of extension. The acetyltransferase clz6 appears to have a broad substrate selectivity for its acyl CoA substrate, allowing the in vitro synthesis of novel squalestatins. The biosynthesis of SQS1 requires several oxidative steps likely performed by oxidoreductases clz3, clz15 and clz16. Finally, in support of the identification of the cluster as being responsible for SQS1 production, the cluster contains a gene encoding a putative squalene synthase (SS) clz20, suggesting a likely mechanism for self-resistance. In Cochliobolus lunatus (Filamentous fungus), this protein is Probable copper-dependent oxygenase clz3.